Consider the following 61-residue polypeptide: Temporin-ALi (61 aa).

The first 22 residues, 1–22, serve as a signal peptide directing secretion; the sequence is MFPLKKSLLLLFFLATINLSLC. The propeptide occupies 23–46; the sequence is EQERNAEEERRDEPDERNAEVEKR. Leu59 carries the leucine amide modification.

Belongs to the frog skin active peptide (FSAP) family. Temporin subfamily. As to expression, expressed by the skin glands.

It is found in the secreted. Its function is as follows. Antimicrobial peptide with activity against Gram-positive and Gram-negative bacteria and against fungi. Has been tested against S.aureus (MIC=7.5 ug/mL), B.pumilus (MIC=7.5 ug/mL), B.cereus (MIC=75.0 ug/mL), E.coli (MIC=7.5 ug/mL), B.dysenteriae (MIC=20.0 ug/mL), A.cacoaceticus (MIC=60.0 ug/mL), P.aeruginosa (MIC=5.0 ug/mL) and C.albicans (MIC=5.0 ug/mL). Also shows a weak hemolytic activity. The polypeptide is Temporin-ALi (Amolops loloensis (Lolokou Sucker Frog)).